The chain runs to 145 residues: uncharacterized protein (145 aa).

This is an uncharacterized protein from Saccharomyces cerevisiae (strain ATCC 204508 / S288c) (Baker's yeast).